Consider the following 366-residue polypeptide: IgG receptor FcRn large subunit p51 (366 aa).

Positions 1 to 22 (MGMSQPGVLLSLLLVLLPQTWG) are cleaved as a signal peptide. The alpha-1 stretch occupies residues 23–111 (AEPRLPLMYH…RTLENQINGT (89 aa)). Residues 23–298 (AEPRLPLMYH…VDLDSPARSS (276 aa)) are Extracellular-facing. Asn109, Asn126, Asn150, and Asn247 each carry an N-linked (GlcNAc...) asparagine glycan. The alpha-2 stretch occupies residues 112-201 (FTLQGLLGCE…ERGRQNLEWK (90 aa)). Cystine bridges form between Cys120–Cys183 and Cys222–Cys276. Residues 202–291 (EPPSMRLKAR…GLAQPLTVDL (90 aa)) are alpha-3. In terms of domain architecture, Ig-like C1-type spans 203–290 (PPSMRLKARP…EGLAQPLTVD (88 aa)). The interval 293 to 298 (SPARSS) is connecting peptide. The helical transmembrane segment at 299-322 (VPVVGIILGLLLVVVAIAGGVLLW) threads the bilayer. Over 323–366 (NRMRSGLPAPWLSLSGDDSGDLLPGGNLPPEAEPQGVNAFPATS) the chain is Cytoplasmic. Ser335 carries the phosphoserine modification. Residues 344 to 366 (LLPGGNLPPEAEPQGVNAFPATS) form a disordered region.

The protein belongs to the immunoglobulin superfamily. As to quaternary structure, fcRn complex consists of two subunits: p51, and p14 which is equivalent to beta-2-microglobulin. It forms an MHC class I-like heterodimer. Interacts with albumin/ALB; this interaction regulates ALB homeostasis. Intestinal epithelium.

The protein resides in the cell membrane. The protein localises to the endosome membrane. Its function is as follows. Cell surface receptor that transfers passive humoral immunity from the mother to the newborn. Binds to the Fc region of monomeric immunoglobulin gamma and mediates its selective uptake from milk. IgG in the milk is bound at the apical surface of the intestinal epithelium. The resultant FcRn-IgG complexes are transcytosed across the intestinal epithelium and IgG is released from FcRn into blood or tissue fluids. Throughout life, contributes to effective humoral immunity by recycling IgG and extending its half-life in the circulation. Mechanistically, monomeric IgG binding to FcRn in acidic endosomes of endothelial and hematopoietic cells recycles IgG to the cell surface where it is released into the circulation. In addition of IgG, regulates homeostasis of the other most abundant circulating protein albumin/ALB. This chain is IgG receptor FcRn large subunit p51 (Fcgrt), found in Rattus norvegicus (Rat).